Here is a 316-residue protein sequence, read N- to C-terminus: Pantothenate kinase (316 aa).

95 to 102 (GSVAVGKS) is an ATP binding site.

This sequence belongs to the prokaryotic pantothenate kinase family.

Its subcellular location is the cytoplasm. It catalyses the reaction (R)-pantothenate + ATP = (R)-4'-phosphopantothenate + ADP + H(+). Its pathway is cofactor biosynthesis; coenzyme A biosynthesis; CoA from (R)-pantothenate: step 1/5. The protein is Pantothenate kinase of Salmonella choleraesuis (strain SC-B67).